Here is a 489-residue protein sequence, read N- to C-terminus: MQSNIELVITDEKVQTRIIADKNILSENFPYFKAMFMYTEGQADYVCLHTQNVQVAHDLIVSCGNTSYKFQDKTWDYIFDLYKCRNFFGLDFIPLVDNTVPPEYIDKLIDTMEIIGYDYSTIKYIAHNLPKDYALNKLSIELLKSIQQILSEFYFLVENRNGLSMFDGVSKMCLKLFEFDFYSVEQMSYCYLNQTNRLVILDTNNILKIFDVQTLNVVAISSGNCFCNSIIYLESKNCIVGINSGGFEIYDAINLKLIGKINGPKQFDYVETSLIGKSSDDKYIIFQQAVETDYGYHYQLMIALVETGEIIGPIYNDKKEFSCICSPTQNIIIYGNYNNFTLWSLDSRSVIAELRLNVDPFKFVFIGFSLDGCYIIFVDSNAIAYIWSIVTKQFIRSNSTISMRNHKNPTYACNSYRQFNKEKFGLNNISILPNNNLVSTKGNCISIWNIMCQEPIESFNLPIDSFMSKIQVITNKRDLANKIRNFINS.

Positions 3 to 73 (SNIELVITDE…GNTSYKFQDK (71 aa)) constitute a BTB domain.

This sequence belongs to the mimivirus BTB/WD family.

The polypeptide is Putative BTB/POZ domain-containing protein R773 (Acanthamoeba polyphaga (Amoeba)).